The following is a 307-amino-acid chain: L-carnitine dehydrogenase (307 aa).

Position 8 to 13 (8 to 13) interacts with NAD(+); sequence GTGVIG.

This sequence belongs to the 3-hydroxyacyl-CoA dehydrogenase family. L-carnitine dehydrogenase subfamily. In terms of assembly, homodimer.

It localises to the cytoplasm. The catalysed reaction is carnitine + NAD(+) = 3-dehydrocarnitine + NADH + H(+). Its pathway is amine and polyamine metabolism; carnitine metabolism. Catalyzes the NAD(+)-dependent oxidation of L-carnitine to 3-dehydrocarnitine. This chain is L-carnitine dehydrogenase, found in Oceanobacillus iheyensis (strain DSM 14371 / CIP 107618 / JCM 11309 / KCTC 3954 / HTE831).